Reading from the N-terminus, the 310-residue chain is Nucleotide-binding protein BLA_1368 (310 aa).

The segment at 1 to 21 (MQSARNEQRGTGPESPHAASP) is disordered. 32-39 (GMSGAGRS) provides a ligand contact to ATP. 83–86 (DVRS) lines the GTP pocket.

Belongs to the RapZ-like family.

Its function is as follows. Displays ATPase and GTPase activities. This is Nucleotide-binding protein BLA_1368 from Bifidobacterium animalis subsp. lactis (strain AD011).